Here is a 180-residue protein sequence, read N- to C-terminus: MSRIGKKPVPIPQNVQVEIKDGNCVLVKGPLGQLEKTFSPLLTIKKVDNQIVVERPNDEKFVKALHGLTRALINNMVLGVTQGFEKRLELQGTGYRARVQGNKLILEVGFSHPVELEIPTGLTVTVQDNTKISVKGIDKELVGQFAAIVRSVRPAEPYKGKGIRYEGEKIRQKAGKAGKK.

It belongs to the universal ribosomal protein uL6 family. As to quaternary structure, part of the 50S ribosomal subunit.

This protein binds to the 23S rRNA, and is important in its secondary structure. It is located near the subunit interface in the base of the L7/L12 stalk, and near the tRNA binding site of the peptidyltransferase center. The chain is Large ribosomal subunit protein uL6 from Dictyoglomus thermophilum (strain ATCC 35947 / DSM 3960 / H-6-12).